The chain runs to 123 residues: MPTINQLLRKKRIKPVARNKVPALQKQPLKRGVCVKVYTTTPKKPNSALRKVARVRLSNGFEVTAYIGGEGHNLQEHSVVLIRGGRVKDLPGVRYHILRGNLDTQGVANRKKRRSLYGTKKGK.

Aspartate 89 is subject to 3-methylthioaspartic acid.

It belongs to the universal ribosomal protein uS12 family. Part of the 30S ribosomal subunit. Contacts proteins S8 and S17. May interact with IF1 in the 30S initiation complex.

With S4 and S5 plays an important role in translational accuracy. Its function is as follows. Interacts with and stabilizes bases of the 16S rRNA that are involved in tRNA selection in the A site and with the mRNA backbone. Located at the interface of the 30S and 50S subunits, it traverses the body of the 30S subunit contacting proteins on the other side and probably holding the rRNA structure together. The combined cluster of proteins S8, S12 and S17 appears to hold together the shoulder and platform of the 30S subunit. This is Small ribosomal subunit protein uS12 from Pelagibacter ubique (strain HTCC1062).